A 578-amino-acid chain; its full sequence is Ketol-acid reductoisomerase, chloroplastic (578 aa).

The N-terminal 52 residues, 1-52 (MAASTTLALSHPKTLAAAAAAAPKAPTAPAAVSFPVSHAACAPLAARRRAVT), are a transit peptide targeting the chloroplast. Residues 90 to 288 (VRGGRNLFPL…ALGSPFTFAT (199 aa)) form the KARI N-terminal Rossmann domain. Residues 111–118 (GVIGWGSQ), 144–149 (RKGSKS), and 183–187 (SDAAQ) contribute to the NADP(+) site. H208 is a catalytic residue. KARI C-terminal knotted domains lie at 289-437 (TLEQ…RPEN) and 438-574 (DLGP…RPEL). 4 residues coordinate Mg(2+): D297, E301, E474, and E478. S500 serves as a coordination point for substrate.

Belongs to the ketol-acid reductoisomerase family. In terms of assembly, homodimer. It depends on Mg(2+) as a cofactor.

The protein localises to the plastid. The protein resides in the chloroplast. It carries out the reaction (2R)-2,3-dihydroxy-3-methylbutanoate + NADP(+) = (2S)-2-acetolactate + NADPH + H(+). The catalysed reaction is (2R,3R)-2,3-dihydroxy-3-methylpentanoate + NADP(+) = (S)-2-ethyl-2-hydroxy-3-oxobutanoate + NADPH + H(+). Its pathway is amino-acid biosynthesis; L-isoleucine biosynthesis; L-isoleucine from 2-oxobutanoate: step 2/4. The protein operates within amino-acid biosynthesis; L-valine biosynthesis; L-valine from pyruvate: step 2/4. This Oryza sativa subsp. japonica (Rice) protein is Ketol-acid reductoisomerase, chloroplastic.